A 227-amino-acid chain; its full sequence is NAD(P)H-quinone oxidoreductase subunit K, chloroplastic (227 aa).

Positions 43, 44, 108, and 139 each coordinate [4Fe-4S] cluster.

It belongs to the complex I 20 kDa subunit family. In terms of assembly, NDH is composed of at least 16 different subunits, 5 of which are encoded in the nucleus. Requires [4Fe-4S] cluster as cofactor.

It is found in the plastid. The protein localises to the chloroplast thylakoid membrane. It carries out the reaction a plastoquinone + NADH + (n+1) H(+)(in) = a plastoquinol + NAD(+) + n H(+)(out). It catalyses the reaction a plastoquinone + NADPH + (n+1) H(+)(in) = a plastoquinol + NADP(+) + n H(+)(out). NDH shuttles electrons from NAD(P)H:plastoquinone, via FMN and iron-sulfur (Fe-S) centers, to quinones in the photosynthetic chain and possibly in a chloroplast respiratory chain. It has NADH- and deamino-NADH-specific dehydrogenase activity, using ferricyanide or quinones as acceptors. The immediate electron acceptor for the enzyme in this species is believed to be plastoquinone. Couples the redox reaction to proton translocation, and thus conserves the redox energy in a proton gradient. The chain is NAD(P)H-quinone oxidoreductase subunit K, chloroplastic from Pisum sativum (Garden pea).